The following is a 971-amino-acid chain: Valine--tRNA ligase (971 aa).

Positions 55–65 (PNVTGSLHMGH) match the 'HIGH' region motif. Residues 572-576 (KMSKS) carry the 'KMSKS' region motif. ATP is bound at residue Lys-575. The stretch at 906–933 (KAELGRLQKDLDKVQKQHDQIASKLANE) forms a coiled coil.

This sequence belongs to the class-I aminoacyl-tRNA synthetase family. ValS type 1 subfamily. Monomer.

The protein resides in the cytoplasm. It catalyses the reaction tRNA(Val) + L-valine + ATP = L-valyl-tRNA(Val) + AMP + diphosphate. Catalyzes the attachment of valine to tRNA(Val). As ValRS can inadvertently accommodate and process structurally similar amino acids such as threonine, to avoid such errors, it has a 'posttransfer' editing activity that hydrolyzes mischarged Thr-tRNA(Val) in a tRNA-dependent manner. This is Valine--tRNA ligase from Acinetobacter baylyi (strain ATCC 33305 / BD413 / ADP1).